The chain runs to 422 residues: Replication factor C large subunit (422 aa).

63–70 (GPPGVGKT) is an ATP binding site.

Belongs to the activator 1 small subunits family. RfcL subfamily. In terms of assembly, heteromultimer composed of small subunits (RfcS) and large subunits (RfcL).

Its function is as follows. Part of the RFC clamp loader complex which loads the PCNA sliding clamp onto DNA. The sequence is that of Replication factor C large subunit from Pyrobaculum aerophilum (strain ATCC 51768 / DSM 7523 / JCM 9630 / CIP 104966 / NBRC 100827 / IM2).